Consider the following 371-residue polypeptide: 4-hydroxybenzoate polyprenyltransferase, mitochondrial (371 aa).

Residues 1–34 (MLGSRAAGFARGLRAVALAWLPGWRGRSFALARA) constitute a mitochondrion transit peptide. The Mitochondrial matrix segment spans residues 35 to 83 (AGAPHGGDLQPPACPEPRGRQLSLSAAAVVDSAPRPLQPYLRLMRLDKP). The helical transmembrane segment at 84 to 104 (IGTWLLYLPCTWSIGLAAEPG) threads the bilayer. Topologically, residues 105-108 (CFPD) are mitochondrial intermembrane. The chain crosses the membrane as a helical span at residues 109–129 (WYMLSLFGTGAILMRGAGCTI). Residues 130 to 148 (NDMWDQDYDKKVTRTANRP) are Mitochondrial matrix-facing. Residues 149–169 (IAAGDISTFQSFVFLGGQLTL) traverse the membrane as a helical segment. Topologically, residues 170–172 (ALG) are mitochondrial intermembrane. The chain crosses the membrane as a helical span at residues 173 to 193 (VLLCLNYYSIALGAGSLLLVI). Over 194-203 (TYPLMKRISY) the chain is Mitochondrial matrix. A helical membrane pass occupies residues 204–224 (WPQLALGLTFNWGALLGWSAI). The Mitochondrial intermembrane portion of the chain corresponds to 225–231 (KGSCDPS). A helical membrane pass occupies residues 232–252 (VCLPLYFSGVMWTLIYDTIYA). Over 253 to 277 (HQDKRDDVLIGLKSTALRFGENTKP) the chain is Mitochondrial matrix. Residues 278–298 (WLSGFSVAMLGALSLVGVNSG) traverse the membrane as a helical segment. At 299-300 (QT) the chain is on the mitochondrial intermembrane side. A helical transmembrane segment spans residues 301–321 (APYYAALGAVGAHLTHQIYTL). The Mitochondrial matrix segment spans residues 322–332 (DIHRPEDCWNK). Residues 333–353 (FISNRTLGLIVFLGIVLGNLW) form a helical membrane-spanning segment. The Mitochondrial intermembrane portion of the chain corresponds to 354 to 371 (KEKKTDKTKKGIENKIEN).

It belongs to the UbiA prenyltransferase family. Mg(2+) serves as cofactor. Widely expressed. Present in all of the tissues tested. Expressed at higher level in skeletal muscle, adrenal glands and the heart.

The protein localises to the mitochondrion inner membrane. The catalysed reaction is an all-trans-polyprenyl diphosphate + 4-hydroxybenzoate = a 4-hydroxy-3-(all-trans-polyprenyl)benzoate + diphosphate. It carries out the reaction all-trans-decaprenyl diphosphate + 4-hydroxybenzoate = 4-hydroxy-3-(all-trans-decaprenyl)benzoate + diphosphate. It catalyses the reaction all-trans-nonaprenyl diphosphate + 4-hydroxybenzoate = 4-hydroxy-3-(all-trans-nonaprenyl)benzoate + diphosphate. It functions in the pathway cofactor biosynthesis; ubiquinone biosynthesis. Functionally, mediates the second step in the final reaction sequence of coenzyme Q (CoQ) biosynthesis. Catalyzes the prenylation of para-hydroxybenzoate (PHB) with an all-trans polyprenyl donor (such as all-trans-decaprenyl diphosphate). The length of the polyprenyl side chain varies depending on the species, in humans, the side chain is comprised of 10 isoprenyls (decaprenyl) producing CoQ10 (also known as ubiquinone), whereas rodents predominantly generate CoQ9. However, this specificity is not complete, human tissues have low amounts of CoQ9 and rodent organs contain some CoQ10. Plays a central role in the biosynthesis of CoQ10. CoQ10 is a vital molecule that transports electrons from mitochondrial respiratory chain complexes. CoQs also function as cofactors for uncoupling protein and play a role as regulators of the extracellularly-induced ceramide-dependent apoptotic pathway. Regulates mitochondrial permeability transition pore (mPTP) opening and ROS production (pivotal events in cell death) in a tissue specific manner. The chain is 4-hydroxybenzoate polyprenyltransferase, mitochondrial from Homo sapiens (Human).